Reading from the N-terminus, the 612-residue chain is Isocitrate dehydrogenase kinase/phosphatase (612 aa).

Residues 327-333 (APGIKGL) and K348 contribute to the ATP site. Residue D383 is part of the active site. Positions 593–612 (AGRASPEPDAPADARSVRVA) are disordered.

The protein belongs to the AceK family.

Its subcellular location is the cytoplasm. The enzyme catalyses L-seryl-[isocitrate dehydrogenase] + ATP = O-phospho-L-seryl-[isocitrate dehydrogenase] + ADP + H(+). Its function is as follows. Bifunctional enzyme which can phosphorylate or dephosphorylate isocitrate dehydrogenase (IDH) on a specific serine residue. This is a regulatory mechanism which enables bacteria to bypass the Krebs cycle via the glyoxylate shunt in response to the source of carbon. When bacteria are grown on glucose, IDH is fully active and unphosphorylated, but when grown on acetate or ethanol, the activity of IDH declines drastically concomitant with its phosphorylation. This is Isocitrate dehydrogenase kinase/phosphatase from Paraburkholderia phytofirmans (strain DSM 17436 / LMG 22146 / PsJN) (Burkholderia phytofirmans).